A 25-amino-acid polypeptide reads, in one-letter code: Aggression-stimulating peptide (25 aa).

In terms of tissue distribution, expressed by the skin glands of male frogs.

Its subcellular location is the secreted. Stimulates aggressive behavior in male frogs. No effect on female frogs. This chain is Aggression-stimulating peptide, found in Leptodactylus fallax (Mountain chicken frog).